An 812-amino-acid polypeptide reads, in one-letter code: Collagen-like protein 5 (812 aa).

N-linked (GlcNAc...) asparagine; by host glycosylation is found at Asn13 and Asn83. 3 Collagen-like domains span residues 69–128 (GASG…KGDD), 143–502 (GEKG…KGDN), and 506–565 (GETG…KGEA). The interval 71 to 568 (SGAQGVKGDP…PGIKGEAGTN (498 aa)) is disordered. 4 stretches are compositionally biased toward basic and acidic residues: residues 88-112 (TKGE…EKGD), 121-435 (SKGD…ETGS), 444-523 (SKGD…KGIK), and 531-561 (VKGD…DPGI). The N-linked (GlcNAc...) asparagine; by host glycan is linked to Asn502. N-linked (GlcNAc...) asparagine; by host glycosylation is found at Asn637, Asn658, and Asn667. A disordered region spans residues 730-802 (GQARTNGAST…VSASGGRGGD (73 aa)). Residues 752–765 (FGGGGGGASGFAKG) show a composition bias toward gly residues.

In terms of processing, may be hydroxylated on lysine by the viral-encoded procollagen-lysine,2-oxoglutarate 5-dioxygenase.

The protein resides in the virion. Its function is as follows. May participate in the formation of a layer of cross-linked glycosylated fibrils at the viral surface thus giving it a hairy-like appearance. The chain is Collagen-like protein 5 from Acanthamoeba polyphaga (Amoeba).